The primary structure comprises 404 residues: Glycosyltransferase GlyB (404 aa).

The GT8 domain stretch occupies residues 1–267 (MNTKSIVFNA…ILLRKDIISR (267 aa)). UDP-binding positions include 9–14 (NADNDY) and 103–104 (DS). Residues D103, D105, and H228 each coordinate Mn(2+). 228–233 (HYTGVK) contacts UDP.

In the N-terminal section; belongs to the glycosyltransferase 8 family.

Functionally, may be involved in the polymorphic O-glycosylation of the serine-rich repeat protein PsrP. Has equal hydrolytic activity against both UDP-galactose and UDP-glucose; no glycosyltransferase activity has been seen with tested substrates. The protein is Glycosyltransferase GlyB of Streptococcus pneumoniae serotype 4 (strain ATCC BAA-334 / TIGR4).